The sequence spans 360 residues: DNA replication and repair protein RecF (360 aa).

30–37 (GHNGSGKT) lines the ATP pocket.

The protein belongs to the RecF family.

It localises to the cytoplasm. Its function is as follows. The RecF protein is involved in DNA metabolism; it is required for DNA replication and normal SOS inducibility. RecF binds preferentially to single-stranded, linear DNA. It also seems to bind ATP. The polypeptide is DNA replication and repair protein RecF (Actinobacillus pleuropneumoniae serotype 5b (strain L20)).